Consider the following 353-residue polypeptide: Rhodopsin (353 aa).

At 1–36 (MNGTEGPYFYIPMVNTTGIVRSPYEYPQYYLVNPAA) the chain is on the extracellular side. N-linked (GlcNAc...) asparagine glycosylation is found at Asn-2 and Asn-15. Residues 37 to 61 (YAALGAYMFLLILVGFPINFLTLYV) traverse the membrane as a helical segment. Over 62-73 (TIEHKKLRTPLN) the chain is Cytoplasmic. Residues 74–96 (YILLNLAVANLFMVFGGFTTTMY) traverse the membrane as a helical segment. Topologically, residues 97-110 (TSMHGYFVLGRLGC) are extracellular. A disulfide bridge links Cys-110 with Cys-187. The chain crosses the membrane as a helical span at residues 111 to 133 (NLEGFFATLGGEIALWSLVVLAI). The short motif at 134 to 136 (ERW) is the 'Ionic lock' involved in activated form stabilization element. Topologically, residues 134–152 (ERWMVVCKPISNFRFGEDH) are cytoplasmic. The chain crosses the membrane as a helical span at residues 153–173 (AIMGLAFTWVMAAACAVPPLV). Residues 174–202 (GWSRYIPEGMQCSCGIDYYTRAEGFNNES) lie on the Extracellular side of the membrane. An N-linked (GlcNAc...) asparagine glycan is attached at Asn-200. Residues 203–224 (FVIYMFVCHFLIPLVVVFFCYG) traverse the membrane as a helical segment. Residues 225–252 (RLLCAVKEAAAAQQESETTQRAEREVSR) are Cytoplasmic-facing. The chain crosses the membrane as a helical span at residues 253–274 (MVVIMVVAFLICWCPYAGVAWY). The Extracellular segment spans residues 275 to 286 (IFTHQGSEFGPL). A helical membrane pass occupies residues 287-308 (FMTFPAFFAKSSSIYNPMIYIC). Lys-296 is subject to N6-(retinylidene)lysine. Residues 309–353 (MNKQFRHCMITTLCCGKNPFEEEEGASTTSKTEASSVSSSSVSPA) lie on the Cytoplasmic side of the membrane. S-palmitoyl cysteine attachment occurs at residues Cys-322 and Cys-323. A disordered region spans residues 330 to 353 (EEEGASTTSKTEASSVSSSSVSPA). The span at 334-353 (ASTTSKTEASSVSSSSVSPA) shows a compositional bias: low complexity.

Belongs to the G-protein coupled receptor 1 family. Opsin subfamily. Phosphorylated on some or all of the serine and threonine residues present in the C-terminal region. In terms of processing, contains one covalently linked retinal chromophore.

Its subcellular location is the membrane. It is found in the cell projection. The protein localises to the cilium. The protein resides in the photoreceptor outer segment. Its function is as follows. Photoreceptor required for image-forming vision at low light intensity. While most salt water fish species use retinal as chromophore, most freshwater fish use 3-dehydroretinal, or a mixture of retinal and 3-dehydroretinal. Light-induced isomerization of 11-cis to all-trans retinal triggers a conformational change that activates signaling via G-proteins. Subsequent receptor phosphorylation mediates displacement of the bound G-protein alpha subunit by arrestin and terminates signaling. The chain is Rhodopsin (rho) from Chelon saliens (Leaping mullet).